Here is a 181-residue protein sequence, read N- to C-terminus: MASLTSLIFVSIVTAAHGQTVVSIPLGHNYTLIGPPITSEVIWAKLGSVDYFDIICNKTKPIIVTCNIQNLTLINVSKVYSGYYYGYDRYSSQYRNYLVRVTQLKTTKMPNMAKIRSDDNSLETFTSPTTPDEKNIPDSMIAIVAAVAVVMALIIICMLLYACRYKKFHPKKQDLLLRLNI.

N-linked (GlcNAc...) asparagine; by host glycans are attached at residues N29, N57, N70, and N75.

Belongs to the adenoviridae E3_20 family.

E3 proteins seem to be dispensable for virus growth in tissue culture cells. They are potentially important for virus growth under special conditions; E3 region may help adenoviruses to evade the immune surveillance of the host. This chain is Early E3 20.3 kDa glycoprotein, found in Human adenovirus B serotype 11 (strain Slobiski) (HAdV-11).